Here is a 496-residue protein sequence, read N- to C-terminus: MIPVVALVGRPNVGKSTLFNRLTRSRDALVADFPGLTRDRKYGQAKVGEHDFIVIDTGGIDGSEEGVETKMAEQSLAAIREADVVLFMVDGRAGLTPSDEAIAAHLRKIEKATMLVVNKVDGIDADAASADFWQLGVDEMYQIAAAHGRGVTALIERALDPFFDNLLSTNSEGEIEDLTNMEDEEAEQQEYSEEDAEESLKRLQDQPIKLAIIGRPNVGKSTLTNRILGEERVVVYDMPGTTRDSIYIPMERDGREYVLIDTAGVRRRGKVHETVEKFSVVKTLKAVEDANVVLLVIDARENISDQDLSLLGFALNAGRSIVLAVNKWDGLDNEVKENVKKELDRRLGFVDFARIHFISALHGTGVGHLFESVQEAYRSATTRVGTSVLTRIMKMATEDHQPPMVRGRRVKLKYAHAGGYNPPIVVIHGNQVRELPDSYKRYLMNYFRKSLDIMGTPIRIQFQNSDNPFENRVNKMTLSQERARKRMMSAVKNRKK.

EngA-type G domains are found at residues 3 to 166 (PVVA…FDNL) and 208 to 381 (IKLA…RSAT). Residues 9-16 (GRPNVGKS), 56-60 (DTGGI), 118-121 (NKVD), 214-221 (GRPNVGKS), 261-265 (DTAGV), and 326-329 (NKWD) each bind GTP. A KH-like domain is found at 382 to 466 (TRVGTSVLTR…PIRIQFQNSD (85 aa)).

Belongs to the TRAFAC class TrmE-Era-EngA-EngB-Septin-like GTPase superfamily. EngA (Der) GTPase family. In terms of assembly, associates with the 50S ribosomal subunit.

GTPase that plays an essential role in the late steps of ribosome biogenesis. In Vibrio vulnificus (strain YJ016), this protein is GTPase Der.